The following is a 248-amino-acid chain: Ras-related protein Rab-28 (248 aa).

The interval 1-30 (MTTMGEDEAPALPKKSPLPEKIDEADVDDD) is disordered. 42 to 50 (GDGASGKTS) lines the GTP pocket. The Effector region motif lies at 64–72 (YHQTLGLDF). Residues 91-95 (DIGGQ), 152-155 (NKTD), and 182-184 (SAK) each bind GTP. The segment at 227–248 (QSDASYARRSDQSRSTSVCSIT) is disordered. Residues 239 to 248 (SRSTSVCSIT) show a composition bias toward polar residues.

Belongs to the small GTPase superfamily. Rab family. As to expression, expressed in amphid and phasmid ciliated sensory neurons.

Its subcellular location is the cell projection. It localises to the cilium membrane. The protein localises to the perikaryon. It is found in the cytoplasm. The protein resides in the cytoskeleton. Its subcellular location is the cilium axoneme. In terms of biological role, GTPase. Intraflagellar transport (IFT) cargo that undergoes bidirectional IFT along the ciliary axoneme when in active GTP-bound state in amphid and phasmid ciliated sensory neurons. Targeting and function as IFT cargo may depend on the BBSome, an IFT cargo adapter. Does not undergo IFT when in inactive GDP-bound state. May in turn play a role in cilium structure and/or function in ciliated sensory neurons. The protein is Ras-related protein Rab-28 of Caenorhabditis elegans.